Consider the following 102-residue polypeptide: UPF0235 protein Swol_0959 (102 aa).

Belongs to the UPF0235 family.

This chain is UPF0235 protein Swol_0959, found in Syntrophomonas wolfei subsp. wolfei (strain DSM 2245B / Goettingen).